Here is a 616-residue protein sequence, read N- to C-terminus: Dihydroxy-acid dehydratase (616 aa).

Asp-81 is a binding site for Mg(2+). Cys-122 contributes to the [2Fe-2S] cluster binding site. Mg(2+) is bound by residues Asp-123 and Lys-124. Lys-124 bears the N6-carboxylysine mark. [2Fe-2S] cluster is bound at residue Cys-195. Residue Glu-491 coordinates Mg(2+). The Proton acceptor role is filled by Ser-517.

The protein belongs to the IlvD/Edd family. As to quaternary structure, homodimer. [2Fe-2S] cluster serves as cofactor. The cofactor is Mg(2+).

The enzyme catalyses (2R)-2,3-dihydroxy-3-methylbutanoate = 3-methyl-2-oxobutanoate + H2O. The catalysed reaction is (2R,3R)-2,3-dihydroxy-3-methylpentanoate = (S)-3-methyl-2-oxopentanoate + H2O. It participates in amino-acid biosynthesis; L-isoleucine biosynthesis; L-isoleucine from 2-oxobutanoate: step 3/4. Its pathway is amino-acid biosynthesis; L-valine biosynthesis; L-valine from pyruvate: step 3/4. In terms of biological role, functions in the biosynthesis of branched-chain amino acids. Catalyzes the dehydration of (2R,3R)-2,3-dihydroxy-3-methylpentanoate (2,3-dihydroxy-3-methylvalerate) into 2-oxo-3-methylpentanoate (2-oxo-3-methylvalerate) and of (2R)-2,3-dihydroxy-3-methylbutanoate (2,3-dihydroxyisovalerate) into 2-oxo-3-methylbutanoate (2-oxoisovalerate), the penultimate precursor to L-isoleucine and L-valine, respectively. In Escherichia coli O8 (strain IAI1), this protein is Dihydroxy-acid dehydratase.